A 244-amino-acid polypeptide reads, in one-letter code: MILTVDVGNTRIKAAVFEGSSVLEYFVFEKNELEKRIEKILEKFPNCSDLVVASVGDVEKQSFLSFEKQLNVHFFTHEDIFPFHNKYATPKTLGIDRMILAAGATLQFPKQNRLVIDAGTCITYDFIDENDNYLGGAISPGLRLRYETLHNYTARLPLLTLDQPHSYIGDSTAQAIHSGVVNGFVYEIDGFIDEYRSNFSNFIIILTGGDAEFLAKRLKNTIFANSNFLLESLSQTYQYKIDND.

Position 6 to 13 (6 to 13 (DVGNTRIK)) interacts with ATP. Substrate contacts are provided by residues Y87 and 94 to 97 (GIDR). The active-site Proton acceptor is the D96. K(+) is bound at residue D117. T120 provides a ligand contact to ATP. A substrate-binding site is contributed by T172.

It belongs to the type III pantothenate kinase family. In terms of assembly, homodimer. NH4(+) serves as cofactor. Requires K(+) as cofactor.

Its subcellular location is the cytoplasm. It carries out the reaction (R)-pantothenate + ATP = (R)-4'-phosphopantothenate + ADP + H(+). It participates in cofactor biosynthesis; coenzyme A biosynthesis; CoA from (R)-pantothenate: step 1/5. Its function is as follows. Catalyzes the phosphorylation of pantothenate (Pan), the first step in CoA biosynthesis. This is Type III pantothenate kinase from Flavobacterium johnsoniae (strain ATCC 17061 / DSM 2064 / JCM 8514 / BCRC 14874 / CCUG 350202 / NBRC 14942 / NCIMB 11054 / UW101) (Cytophaga johnsonae).